The sequence spans 326 residues: tRNA uridine(34) hydroxylase (326 aa).

One can recognise a Rhodanese domain in the interval Ala123–Ser217. Cys177 (cysteine persulfide intermediate) is an active-site residue. The disordered stretch occupies residues Ala293–Ala326. Over residues Arg311–Ala326 the composition is skewed to basic and acidic residues.

Belongs to the TrhO family.

The catalysed reaction is uridine(34) in tRNA + AH2 + O2 = 5-hydroxyuridine(34) in tRNA + A + H2O. In terms of biological role, catalyzes oxygen-dependent 5-hydroxyuridine (ho5U) modification at position 34 in tRNAs. The protein is tRNA uridine(34) hydroxylase of Vibrio campbellii (strain ATCC BAA-1116).